A 578-amino-acid chain; its full sequence is Kelch-like protein 30 (578 aa).

The BTB domain occupies A33 to Q100. The BACK domain occupies K153 to G255. Kelch repeat units follow at residues V270 to N326, N327 to G377, E378 to G422, L424 to G471, L473 to D513, and A514 to L563.

The polypeptide is Kelch-like protein 30 (KLHL30) (Homo sapiens (Human)).